Consider the following 395-residue polypeptide: MPGGMMADLEAFRKAQRADGPATILAIGTATPPNAVDQSTYPDYYFKITNSEHMTELKEKFRRMCDKSGIKKRYMYLTEEILNENPSVCAYMAPSLDARQDMVVVEVPRLGKEAAAKAIKEWGQPKSKITHVIFCTTSGVDMPGADYQMTKLLGLRPSVKRVMMYQQGCFAGGTVLRVAKDLAENNRGARVLVVCSEITAVTFRGPSDTHLDSMVGQALFGDGARALIVGADPVPEVEKPCFEMLWTAQTILPDSDGAIDGHLREVGLTFHLLKDVPGLISKNIEKSLVEAFQQFGISDWNQLFWIAHPGGPAILDQVEAKLNLDPKKLRATRQVLSEYGNMSSACVHFILDEMRKSSQQNGCSTTGEGLDVGVLFGFGPGLTVETVVLKSVPLQ.

C169 is a catalytic residue.

This sequence belongs to the thiolase-like superfamily. Chalcone/stilbene synthases family.

The enzyme catalyses (E)-4-coumaroyl-CoA + 3 malonyl-CoA + 3 H(+) = 2',4,4',6'-tetrahydroxychalcone + 3 CO2 + 4 CoA. It participates in secondary metabolite biosynthesis; flavonoid biosynthesis. In terms of biological role, the primary product of this enzyme is 4,2',4',6'-tetrahydroxychalcone (also termed naringenin-chalcone or chalcone) which can under specific conditions spontaneously isomerize into naringenin. The chain is Chalcone synthase (CHS) from Pinus strobus (Eastern white pine).